The chain runs to 349 residues: Green-sensitive opsin-2 (349 aa).

Residues 1-36 lie on the Extracellular side of the membrane; the sequence is MNGTEGNNFYIPMSNRTGLVRSPYEYTQYYLADPWQ. Asn2 and Asn15 each carry an N-linked (GlcNAc...) asparagine glycan. A helical membrane pass occupies residues 37-61; it reads FKALAFYMFFLICFGLPINVLTLLV. Over 62-73 the chain is Cytoplasmic; it reads TAQHKKLRQPLN. Residues 74 to 99 form a helical membrane-spanning segment; sequence YILVNLAFAGTIMAFFGFTVTFYCSI. Topologically, residues 100–113 are extracellular; it reads NGYMALGPTGCAIE. A disulfide bond links Cys110 and Cys187. A helical transmembrane segment spans residues 114–133; sequence GFFATLGGQVALWSLVVLAI. Residues 134–152 are Cytoplasmic-facing; it reads ERYIVVCKPMGSFKFSSNH. A helical membrane pass occupies residues 153–176; that stretch reads AMAGIAFTWVMASSCAVPPLFGWS. Residues 177–202 are Extracellular-facing; the sequence is RYIPEGMQTSCGPDYYTLNPEFNNES. N-linked (GlcNAc...) asparagine glycosylation occurs at Asn200. The chain crosses the membrane as a helical span at residues 203-230; that stretch reads YVLYMFSCHFCVPVTTIFFTYGSLVCTV. The Cytoplasmic portion of the chain corresponds to 231–252; the sequence is KAAAAQQQESESTQKAEREVTR. The chain crosses the membrane as a helical span at residues 253-276; the sequence is MVILMVLGFLVAWVPYASFAAWIF. The Extracellular portion of the chain corresponds to 277–284; that stretch reads FNRGAAFS. The chain crosses the membrane as a helical span at residues 285 to 309; that stretch reads AQAMAIPAFFSKASALFNPIIYVLL. Lys296 carries the N6-(retinylidene)lysine modification. Residues 310–349 are Cytoplasmic-facing; that stretch reads NKQFRSCMLNTLFCGKSPLGDDESSSVSTSKTEVSSVSPA. A disordered region spans residues 328 to 349; sequence LGDDESSSVSTSKTEVSSVSPA. A compositionally biased stretch (low complexity) spans 334 to 349; the sequence is SSVSTSKTEVSSVSPA.

The protein belongs to the G-protein coupled receptor 1 family. Opsin subfamily. Post-translationally, phosphorylated on some or all of the serine and threonine residues present in the C-terminal region.

The protein localises to the membrane. In terms of biological role, visual pigments are the light-absorbing molecules that mediate vision. They consist of an apoprotein, opsin, covalently linked to cis-retinal. In Danio rerio (Zebrafish), this protein is Green-sensitive opsin-2 (opn1mw2).